Here is a 182-residue protein sequence, read N- to C-terminus: Flavin prenyltransferase UbiX (182 aa).

Residues 9–11, S35, 86–89, and R121 each bind FMN; these read GAS and SIKT. Dimethylallyl phosphate contacts are provided by Y151 and R167.

It belongs to the UbiX/PAD1 family.

It catalyses the reaction dimethylallyl phosphate + FMNH2 = prenylated FMNH2 + phosphate. Its function is as follows. Flavin prenyltransferase that catalyzes the synthesis of the prenylated FMN cofactor (prenyl-FMN) for 4-hydroxy-3-polyprenylbenzoic acid decarboxylase UbiD. The prenyltransferase is metal-independent and links a dimethylallyl moiety from dimethylallyl monophosphate (DMAP) to the flavin N5 and C6 atoms of FMN. In Archaeoglobus fulgidus (strain ATCC 49558 / DSM 4304 / JCM 9628 / NBRC 100126 / VC-16), this protein is Flavin prenyltransferase UbiX.